The sequence spans 142 residues: Maximins y/H11 (142 aa).

Residues 1 to 18 (MNFKYIVAVSFLITSGYA) form the signal peptide. Positions 19–43 (ESVKNDEQSLSQRDVLEEESLREIR) are excised as a propeptide. Phenylalanine amide is present on Phe68. Residues 72–121 (SAEDHEVMKRLEAVIRDLDSLDHPEEASERETRGFNQEEIANLFTKKEKR) constitute a propeptide that is removed on maturation. An Isoleucine amide modification is found at Ile141.

It belongs to the bombinin family. As to expression, expressed by the skin glands.

It localises to the secreted. In terms of biological role, maximin-y shows antimicrobial activity against bacteria and against the fungus C.albicans. It has little hemolytic activity. Maximin-H11 shows antimicrobial activity against bacteria and against the fungus C.albicans. Shows strong hemolytic activity. This is Maximins y/H11 from Bombina maxima (Giant fire-bellied toad).